A 711-amino-acid polypeptide reads, in one-letter code: Polyribonucleotide nucleotidyltransferase (711 aa).

Aspartate 494 and aspartate 500 together coordinate Mg(2+). A KH domain is found at 560–620 (PKIEIFGVDP…INVENAKSDI (61 aa)). Residues 651 to 710 (GEEFDGVVKKIMDFGAFISLKDGIDGLLHVSKIKTQLSEGDTLRVKVEEIKRGKISLELC) enclose the S1 motif domain.

The protein belongs to the polyribonucleotide nucleotidyltransferase family. Requires Mg(2+) as cofactor.

The protein resides in the cytoplasm. The enzyme catalyses RNA(n+1) + phosphate = RNA(n) + a ribonucleoside 5'-diphosphate. In terms of biological role, involved in mRNA degradation. Catalyzes the phosphorolysis of single-stranded polyribonucleotides processively in the 3'- to 5'-direction. The sequence is that of Polyribonucleotide nucleotidyltransferase from Campylobacter hominis (strain ATCC BAA-381 / DSM 21671 / CCUG 45161 / LMG 19568 / NCTC 13146 / CH001A).